Here is a 910-residue protein sequence, read N- to C-terminus: Protein translocase subunit SecA (910 aa).

ATP-binding positions include glutamine 86, 104–108 (GEGKT), and aspartate 499. Residues cysteine 894, cysteine 896, cysteine 905, and histidine 906 each contribute to the Zn(2+) site.

It belongs to the SecA family. Monomer and homodimer. Part of the essential Sec protein translocation apparatus which comprises SecA, SecYEG and auxiliary proteins SecDF-YajC and YidC. Zn(2+) is required as a cofactor.

It is found in the cell inner membrane. It localises to the cytoplasm. It carries out the reaction ATP + H2O + cellular proteinSide 1 = ADP + phosphate + cellular proteinSide 2.. Its function is as follows. Part of the Sec protein translocase complex. Interacts with the SecYEG preprotein conducting channel. Has a central role in coupling the hydrolysis of ATP to the transfer of proteins into and across the cell membrane, serving both as a receptor for the preprotein-SecB complex and as an ATP-driven molecular motor driving the stepwise translocation of polypeptide chains across the membrane. This is Protein translocase subunit SecA from Rickettsia bellii (strain RML369-C).